The following is a 363-amino-acid chain: Glycerol-3-phosphate dehydrogenase [NAD(+)], cytoplasmic (363 aa).

Residues 11 to 16 (GSGNWG), phenylalanine 98, lysine 121, and alanine 155 each bind NAD(+). Residue lysine 121 coordinates substrate. Lysine 206 functions as the Proton acceptor in the catalytic mechanism. NAD(+) contacts are provided by arginine 270 and glutamine 299. Substrate is bound at residue 270–271 (RN).

The protein belongs to the NAD-dependent glycerol-3-phosphate dehydrogenase family. In terms of assembly, homodimer. In terms of tissue distribution, isoform GPDH-1 is predominant in thorax and isoform GPDH-3 in abdomen.

The protein resides in the cytoplasm. It catalyses the reaction sn-glycerol 3-phosphate + NAD(+) = dihydroxyacetone phosphate + NADH + H(+). It participates in phospholipid metabolism; alpha-glycerophosphate cycle. The polypeptide is Glycerol-3-phosphate dehydrogenase [NAD(+)], cytoplasmic (Drosophila melanogaster (Fruit fly)).